A 339-amino-acid chain; its full sequence is Tetraacyldisaccharide 4'-kinase (339 aa).

62 to 69 (VAGGTGKT) contributes to the ATP binding site.

The protein belongs to the LpxK family.

The enzyme catalyses a lipid A disaccharide + ATP = a lipid IVA + ADP + H(+). It functions in the pathway glycolipid biosynthesis; lipid IV(A) biosynthesis; lipid IV(A) from (3R)-3-hydroxytetradecanoyl-[acyl-carrier-protein] and UDP-N-acetyl-alpha-D-glucosamine: step 6/6. Transfers the gamma-phosphate of ATP to the 4'-position of a tetraacyldisaccharide 1-phosphate intermediate (termed DS-1-P) to form tetraacyldisaccharide 1,4'-bis-phosphate (lipid IVA). The protein is Tetraacyldisaccharide 4'-kinase of Xylella fastidiosa (strain M12).